A 182-amino-acid polypeptide reads, in one-letter code: Photosystem I assembly protein Ycf4 (182 aa).

A run of 2 helical transmembrane segments spans residues 22–42 (WAIIIGSGGLGFLFTGLSSYL) and 66–86 (FYGILGIFFSLYLGLTILFSV).

This sequence belongs to the Ycf4 family.

It is found in the plastid. The protein localises to the chloroplast thylakoid membrane. Functionally, seems to be required for the assembly of the photosystem I complex. The sequence is that of Photosystem I assembly protein Ycf4 from Tupiella akineta (Green alga).